Here is a 382-residue protein sequence, read N- to C-terminus: MSLKDKTQSLFAETFGYPATHAIQAPGRVNLIGEHTDYNDGFVLPCAIDYQTVISCAKRDDRIVRVIAADYDNQTDEFSLDEPIVAHDTQQWSNYVRGVVKHLQMRNKGFGGADLVIAGNVPQGAGLSSSASLEVAVGTVFQQLYHLPLDGAQIALNGQEAENQFVGCNCGIMDQLISALGKKEHALLIDCRSLGTKAVPLPKGAAVVIINSNFKRTLVGSEYNTRREQCETGARFFQQPALRDVSLNEFNKVAHELDPVVTKRVRHVLTENARTVEAASALAQGDLKRMGELMAESHASMRDDFEITVPQIDTLVEIVKATIGDKGGVRMTGGGFGGCVVALIPEEWVPAVQDAVSQQYEAKTGIKETFYVCKPSQGAGQC.

34–37 is a binding site for substrate; sequence EHTD. 124-130 serves as a coordination point for ATP; the sequence is GAGLSSS. Residues serine 130 and glutamate 162 each contribute to the Mg(2+) site. The Proton acceptor role is filled by aspartate 174. Tyrosine 223 serves as a coordination point for substrate.

It belongs to the GHMP kinase family. GalK subfamily.

The protein resides in the cytoplasm. The catalysed reaction is alpha-D-galactose + ATP = alpha-D-galactose 1-phosphate + ADP + H(+). The protein operates within carbohydrate metabolism; galactose metabolism. Catalyzes the transfer of the gamma-phosphate of ATP to D-galactose to form alpha-D-galactose-1-phosphate (Gal-1-P). The sequence is that of Galactokinase from Enterobacter sp. (strain 638).